We begin with the raw amino-acid sequence, 873 residues long: MSTTVTQVRTGSIPKTLKTSQIRVEEQEITELDTADIPLPPPSKEPTEVLSLDKTTPDSHVPRDPRLIRLTGVHPFNVEPPLTALFQQGFLTPPELFYVRNHGPVPHVRDEDIPNWELRIEGLVEKPITLSFKQILQNYDQITAPITLVCAGNRRKEQNTVRKSKGFSWGSAALSTALFTGPMMADIIKSAKPLRRAKYVCMEGADNLPNGNYGTSIKLNWAMDPNRGIMLAHKMNGEDLRPDHGRPLRAVVPGQIGGRSVKWLKKLIITDAPSDNWYHIYDNRVLPTMVTPDMSSQNPSWWRDERYAIYDLNVNSAAVYPQHKETLDLAAARPFYTAKGYAYAGGGRRITRVEISLDKGKSWRLARIEYAEDKYRDFEGTLYGGRVDMAWREACFCWSFWSLDIPVSELASSDALLVRAMDEALSLQPKDMYWSVLGMMNNPWFRVKITNENGRLLFEHPTDITGSSGWMEQIKKAGGDLTNGNWGERQEGEEPVEAEPVVEVNMKKEGVTRIIDLEEFKKNSSDERPWFVVNGEVYDGTAFLEGHPGGAQSIISAAGTDASEEFLEIHSETAKKMMPDYHIGTLDKASLEALRKGNADTTDSSSDPRPTFLTPKAWTKATLTKKTSVSSDTHIFTLSLEHPSQALGLPTGQHLMLKTPDPKSSSSGSIIRSYTPISPSDQLGMVDILIKIYAETPSIPGGKMTTALDTLPLGSVIECKGPTGRFEYLDRGRVLISGKERFVKSFVMICGGTGITPVFQVLRAVMQDEQDETKCVMLDGNRLEEDILLKNELDEFEALAGKKEKCKIVHTLTKGSESWTGRRGRIDEELIRQHAGTPDRETMVLVCGPEAMEKASKKILLSLGWKEENLHYF.

Positions 30–61 are disordered; sequence TELDTADIPLPPPSKEPTEVLSLDKTTPDSHV. Residue Cys150 coordinates Mo-molybdopterin. The Cytochrome b5 heme-binding domain maps to 512–587; that stretch reads TRIIDLEEFK…MPDYHIGTLD (76 aa). Heme contacts are provided by His547 and His570. An FAD-binding FR-type domain is found at 616–729; the sequence is KAWTKATLTK…KGPTGRFEYL (114 aa). FAD contacts are provided by residues 672–675, 689–693, 703–705, and Thr756; these read RSYT, LIKIY, and KMT. Residue 843–852 coordinates NADP(+); sequence MVLVCGPEAM.

This sequence belongs to the nitrate reductase family. As to quaternary structure, homodimer. FAD serves as cofactor. Heme is required as a cofactor. Requires Mo-molybdopterin as cofactor.

The catalysed reaction is nitrite + NADP(+) + H2O = nitrate + NADPH + H(+). Nitrate reductase is a key enzyme involved in the first step of nitrate assimilation in plants, fungi and bacteria. The polypeptide is Nitrate reductase [NADPH] (niaD) (Emericella nidulans (strain FGSC A4 / ATCC 38163 / CBS 112.46 / NRRL 194 / M139) (Aspergillus nidulans)).